We begin with the raw amino-acid sequence, 96 residues long: Small ribosomal subunit protein bS16 (96 aa).

The protein belongs to the bacterial ribosomal protein bS16 family.

The chain is Small ribosomal subunit protein bS16 from Oenococcus oeni (strain ATCC BAA-331 / PSU-1).